The primary structure comprises 151 residues: Small ribosomal subunit protein uS15 (151 aa).

Positions 1–20 are disordered; sequence MARLHSGKRGSSGSTRPLRT.

Belongs to the universal ribosomal protein uS15 family. In terms of assembly, part of the 30S ribosomal subunit.

The sequence is that of Small ribosomal subunit protein uS15 from Methanococcus maripaludis (strain C7 / ATCC BAA-1331).